The chain runs to 307 residues: MLQRTLAKSIGVTGVGLHSGERVALTLHPAPENSGISFRRTDLDGEMGEQIKLNPYLINDTRLSSTIVTDKGLRVGTIEHIMSALSAYGIDNALIELNAPEIPIMDGSSLPFIYLLQDAGVVDQKAQKRFLKILKPVEIKEAGKWVRFTPYDGFKVTLTIEFDHPVFNRSPPTFEIDFAGKSYIGEIARARTFGFMHEVEMMRAHNLGLGGNLNNAIVIGDTDVLNPEGLRYPDEFVRHKILDAIGDLYIVGHPIVGAFEGYKSGHAVNNALLRAVLADETAYEWVEFADSDDLPDAFHELNIRNCG.

The Zn(2+) site is built by H80, H239, and D243. H266 serves as the catalytic Proton donor.

Belongs to the LpxC family. Zn(2+) serves as cofactor.

It catalyses the reaction a UDP-3-O-[(3R)-3-hydroxyacyl]-N-acetyl-alpha-D-glucosamine + H2O = a UDP-3-O-[(3R)-3-hydroxyacyl]-alpha-D-glucosamine + acetate. It functions in the pathway glycolipid biosynthesis; lipid IV(A) biosynthesis; lipid IV(A) from (3R)-3-hydroxytetradecanoyl-[acyl-carrier-protein] and UDP-N-acetyl-alpha-D-glucosamine: step 2/6. In terms of biological role, catalyzes the hydrolysis of UDP-3-O-myristoyl-N-acetylglucosamine to form UDP-3-O-myristoylglucosamine and acetate, the committed step in lipid A biosynthesis. The protein is UDP-3-O-acyl-N-acetylglucosamine deacetylase of Neisseria gonorrhoeae (strain ATCC 700825 / FA 1090).